The chain runs to 122 residues: Antitoxin protein TsiV3 (122 aa).

An N-terminal signal peptide occupies residues 1–24 (MNNLLSAYVTMLLILLSISGGAIA). 2 disulfides stabilise this stretch: cysteine 28–cysteine 41 and cysteine 82–cysteine 100.

As to quaternary structure, homodimer; dimerization is critical for inhibitory activity. Forms a heterotetramer with VgrG3 composed of one TsiV3 homodimer and two VgrG3 molecules.

Functionally, immunity protein that plays a role in preventing early activation of toxin VgrG3. This is Antitoxin protein TsiV3 from Vibrio cholerae serotype O1 (strain ATCC 39315 / El Tor Inaba N16961).